Consider the following 674-residue polypeptide: 1,4-alpha-glucan branching enzyme GlgB 1 (674 aa).

Residue D336 is the Nucleophile of the active site. Catalysis depends on E389, which acts as the Proton donor.

It belongs to the glycosyl hydrolase 13 family. GlgB subfamily. As to quaternary structure, monomer.

It catalyses the reaction Transfers a segment of a (1-&gt;4)-alpha-D-glucan chain to a primary hydroxy group in a similar glucan chain.. It participates in glycan biosynthesis; glycogen biosynthesis. Catalyzes the formation of the alpha-1,6-glucosidic linkages in glycogen by scission of a 1,4-alpha-linked oligosaccharide from growing alpha-1,4-glucan chains and the subsequent attachment of the oligosaccharide to the alpha-1,6 position. The chain is 1,4-alpha-glucan branching enzyme GlgB 1 from Clostridium perfringens (strain SM101 / Type A).